Reading from the N-terminus, the 791-residue chain is MSRRRHSDENDGGQAHKRRKTSEPLEIEDRLESLICRVGEKSTSSLESNLEGLAGVLEADLPNYKSKILRILCFVARLLPEKMSVYSTLVGLLNARNYNFGGEFVEAMIRHLKETIKLNAYSEAVYLVRFLSDLVNCHVIAAPSMVAMFESFVGVTQEEDIPQVRSDWYVYAVLSSLPWVGKELYEKKDVEMDRILSQIEAYLKQRQKLHVSILQVWSAEKPHPQEEYLDCLWAQIQKLKKDRWQERHILRPYLAFDSVLCEALQHNLPPFTPPPHTEDSVYPVPRVVFRMFDYTDAPEGPVMPGSHSVERFVIEENLHCILKSHWRERKTCAAQLLSYPEKNKIPLNYHIVEVIFGELFQLPTPPHIDVMYTTLLIELCKLQPGSLPQVLAQASEMLYTRLDTMNTICIDRFINWFSHHLSNFQFRWNWEDWADCLSQDLNKPKPQFVREVLEKCMRLSYHQRILDIVPATFSALYPASPSCVFKYGDESNSALPGYSVAVTLTNEIKNKASDKEIFNILKDIPNPNQDDDDDEGISFNPLKIEVFVQSLLNLASKSFSHAFSALAKFHDIFKALSESDEGKLHILRVAYDVWKNHPQMIAVLVDKMIRTQIVDCAAVANWIFSPELSHDFTRFYIWEILHSTIRKMNKHVQKIQKELEETKQRLAKQHKHRDSDDNDEDSGRKDGPLEEQIERLQEKVESAQSEQKNLFLVIFQRFIMILTEHLVRCETGAIDVNTAWYKNCRERLQQIFLQHHQTIQQYMVTLENLLFTAELDHHILTVFQQFCALQS.

The interval 1–24 (MSRRRHSDENDGGQAHKRRKTSEP) is disordered. Residues 28-240 (EDRLESLICR…CLWAQIQKLK (213 aa)) enclose the MIF4G domain. A coiled-coil region spans residues 641–714 (LHSTIRKMNK…SEQKNLFLVI (74 aa)). The disordered stretch occupies residues 664-687 (QRLAKQHKHRDSDDNDEDSGRKDG).

Belongs to the NCBP1 family. Component of the nuclear cap-binding complex (CBC), a heterodimer composed of ncbp1/cbp80 and ncbp2/cbp20 that interacts with m7GpppG-capped RNA. Component of an alternative nuclear cap-binding complex (CBC) composed of ncbp1/cbp80 and ncbp3.

The protein localises to the nucleus. It localises to the cytoplasm. Its function is as follows. Component of the cap-binding complex (CBC), which binds cotranscriptionally to the 5'-cap of pre-mRNAs and is involved in various processes such as pre-mRNA splicing, translation regulation, nonsense-mediated mRNA decay, RNA-mediated gene silencing (RNAi) by microRNAs (miRNAs) and mRNA export. The CBC complex is involved in mRNA export from the nucleus, leading to the recruitment of the mRNA export machinery to the 5'-end of mRNA and to mRNA export in a 5' to 3' direction through the nuclear pore. The CBC complex is also involved in mediating U snRNA and intronless mRNAs export from the nucleus. The CBC complex is essential for a pioneer round of mRNA translation, before steady state translation when the CBC complex is replaced by cytoplasmic cap-binding protein eIF4E. The pioneer round of mRNA translation mediated by the CBC complex plays a central role in nonsense-mediated mRNA decay (NMD), NMD only taking place in mRNAs bound to the CBC complex, but not on eIF4E-bound mRNAs. The CBC complex enhances NMD in mRNAs containing at least one exon-junction complex (EJC), promoting the interaction between UPF1 and UPF2. The CBC complex is also involved in 'failsafe' NMD, which is independent of the EJC complex, while it does not participate in Staufen-mediated mRNA decay (SMD). During cell proliferation, the CBC complex is also involved in microRNAs (miRNAs) biogenesis via its interaction with SRRT/ARS2 and is required for miRNA-mediated RNA interference. The CBC complex also acts as a negative regulator of parn, thereby acting as an inhibitor of mRNA deadenylation. In the CBC complex, NCBP1/CBP80 does not bind directly capped RNAs (m7GpppG-capped RNA) but is required to stabilize the movement of the N-terminal loop of NCBP2/CBP20 and lock the CBC into a high affinity cap-binding state with the cap structure. Associates with NCBP3 to form an alternative cap-binding complex (CBC) which plays a key role in mRNA export. The conventional CBC with NCBP2 binds both small nuclear RNA (snRNA) and messenger (mRNA) and is involved in their export from the nucleus whereas the alternative CBC with NCBP3 does not bind snRNA and associates only with mRNA thereby playing a role only in mRNA export. This is Nuclear cap-binding protein subunit 1-A (ncbp1-a) from Xenopus laevis (African clawed frog).